Reading from the N-terminus, the 1030-residue chain is Beta-galactosidase (1030 aa).

Asparagine 99 and aspartate 197 together coordinate substrate. Aspartate 197 is a binding site for Na(+). Mg(2+)-binding residues include glutamate 411, histidine 413, and glutamate 456. Residues glutamate 456 and 532–535 (EYAH) each bind substrate. Catalysis depends on glutamate 456, which acts as the Proton donor. Glutamate 532 (nucleophile) is an active-site residue. Residue asparagine 592 participates in Mg(2+) binding. Residues phenylalanine 596 and asparagine 599 each coordinate Na(+). Residues asparagine 599 and tryptophan 1004 each contribute to the substrate site.

Belongs to the glycosyl hydrolase 2 family. In terms of assembly, homotetramer. Requires Mg(2+) as cofactor. The cofactor is Na(+).

It catalyses the reaction Hydrolysis of terminal non-reducing beta-D-galactose residues in beta-D-galactosides.. The protein is Beta-galactosidase of Photobacterium profundum (strain SS9).